The chain runs to 300 residues: Acyl-CoA-binding domain-containing protein 6 (300 aa).

Over residues 1–19 the composition is skewed to low complexity; it reads MASRSPSSSPDSATGSGTD. Residues 1-43 form a disordered region; it reads MASRSPSSSPDSATGSGTDPARPDTGEPLGGGSDSDSDFGLGK. The ACB domain occupies 60–145; that stretch reads LENEFESAAD…VHALDPEGSQ (86 aa). An acyl-CoA is bound by residues 87–91, Lys-113, and Tyr-132; that span reads YARFK. The disordered stretch occupies residues 142–162; that stretch reads EGSQKSSERRGGEKRTGFGGP. Basic and acidic residues predominate over residues 147 to 157; the sequence is SSERRGGEKRT. ANK repeat units lie at residues 209 to 238 and 242 to 271; these read EGRALLHWACDRGHKDLVSLLLQNNADINS and EGQTALHYASACEFAEIVELLLKAGADPSI. Residues 270 to 300 are disordered; it reads SIKDQEGSLPEEVTESSAISSLLRQYTAPKG. Residues 284-293 are compositionally biased toward polar residues; sequence ESSAISSLLR.

In terms of tissue distribution, higly expressed in the central nervous system, developing eyes, otic vesicle, and trunk muscles.

It is found in the cytoplasm. The protein localises to the nucleus. Its function is as follows. Binds long-chain acyl-coenzyme A molecules with a strong preference for unsaturated C18:1-CoA. Does not bind fatty acids. Plays a role in protein N-myristoylation. This Danio rerio (Zebrafish) protein is Acyl-CoA-binding domain-containing protein 6 (acbd6).